The sequence spans 213 residues: Ribosomal RNA small subunit methyltransferase G (213 aa).

S-adenosyl-L-methionine contacts are provided by residues G83, L88, 132 to 133, and R146; that span reads IE.

It belongs to the methyltransferase superfamily. RNA methyltransferase RsmG family.

The protein localises to the cytoplasm. It carries out the reaction guanosine(527) in 16S rRNA + S-adenosyl-L-methionine = N(7)-methylguanosine(527) in 16S rRNA + S-adenosyl-L-homocysteine. In terms of biological role, specifically methylates the N7 position of guanine in position 527 of 16S rRNA. This chain is Ribosomal RNA small subunit methyltransferase G, found in Granulibacter bethesdensis (strain ATCC BAA-1260 / CGDNIH1).